The chain runs to 321 residues: Chemotaxis protein CheV1 (321 aa).

A CheW-like domain is found at 19–177 (ELQLLCFRLG…IEKMLIDVFP (159 aa)). The region spanning 198 to 319 (CVLLADDSPS…IQRVVKQFLE (122 aa)) is the Response regulatory domain. Asp-252 bears the 4-aspartylphosphate mark.

Plays an essential role in chemotaxis signal transduction system in order to colonize the host stomach. May act as a phosphate sink to control the flow of phosphate to CheAY. The sequence is that of Chemotaxis protein CheV1 from Helicobacter pylori (strain ATCC 700392 / 26695) (Campylobacter pylori).